Reading from the N-terminus, the 423-residue chain is Enolase (423 aa).

A (2R)-2-phosphoglycerate-binding site is contributed by Gln164. Glu206 serves as the catalytic Proton donor. Mg(2+) is bound by residues Asp243, Glu289, and Asp316. Residues Lys341, Arg370, Ser371, and Lys392 each contribute to the (2R)-2-phosphoglycerate site. Catalysis depends on Lys341, which acts as the Proton acceptor.

It belongs to the enolase family. Requires Mg(2+) as cofactor.

It localises to the cytoplasm. It is found in the secreted. The protein localises to the cell surface. It carries out the reaction (2R)-2-phosphoglycerate = phosphoenolpyruvate + H2O. The protein operates within carbohydrate degradation; glycolysis; pyruvate from D-glyceraldehyde 3-phosphate: step 4/5. In terms of biological role, catalyzes the reversible conversion of 2-phosphoglycerate (2-PG) into phosphoenolpyruvate (PEP). It is essential for the degradation of carbohydrates via glycolysis. This Desulfotalea psychrophila (strain LSv54 / DSM 12343) protein is Enolase.